A 43-amino-acid polypeptide reads, in one-letter code: Protein PsbN (43 aa).

The helical transmembrane segment at 5 to 27 threads the bilayer; the sequence is TLFAISISCLLVSFTGYALYTAF.

The protein belongs to the PsbN family.

It localises to the plastid. The protein localises to the chloroplast thylakoid membrane. Its function is as follows. May play a role in photosystem I and II biogenesis. The sequence is that of Protein PsbN from Thuja plicata (Western red-cedar).